Consider the following 172-residue polypeptide: Small ribosomal subunit protein uS5 (172 aa).

The S5 DRBM domain maps to 17–80; it reads FTEKLIKLNR…ERAKRSMVLF (64 aa).

The protein belongs to the universal ribosomal protein uS5 family. Part of the 30S ribosomal subunit. Contacts proteins S4 and S8.

With S4 and S12 plays an important role in translational accuracy. Its function is as follows. Located at the back of the 30S subunit body where it stabilizes the conformation of the head with respect to the body. This is Small ribosomal subunit protein uS5 from Treponema pallidum (strain Nichols).